We begin with the raw amino-acid sequence, 105 residues long: ATP synthase subunit c (105 aa).

A run of 2 helical transmembrane segments spans residues 32 to 52 and 78 to 98; these read SILG…IGMG and VAMA…IIAI.

It belongs to the ATPase C chain family. F-type ATPases have 2 components, F(1) - the catalytic core - and F(0) - the membrane proton channel. F(1) has five subunits: alpha(3), beta(3), gamma(1), delta(1), epsilon(1). F(0) has three main subunits: a(1), b(2) and c(10-14). The alpha and beta chains form an alternating ring which encloses part of the gamma chain. F(1) is attached to F(0) by a central stalk formed by the gamma and epsilon chains, while a peripheral stalk is formed by the delta and b chains.

It is found in the cell inner membrane. F(1)F(0) ATP synthase produces ATP from ADP in the presence of a proton or sodium gradient. F-type ATPases consist of two structural domains, F(1) containing the extramembraneous catalytic core and F(0) containing the membrane proton channel, linked together by a central stalk and a peripheral stalk. During catalysis, ATP synthesis in the catalytic domain of F(1) is coupled via a rotary mechanism of the central stalk subunits to proton translocation. Its function is as follows. Key component of the F(0) channel; it plays a direct role in translocation across the membrane. A homomeric c-ring of between 10-14 subunits forms the central stalk rotor element with the F(1) delta and epsilon subunits. The polypeptide is ATP synthase subunit c (Helicobacter pylori (strain ATCC 700392 / 26695) (Campylobacter pylori)).